A 309-amino-acid polypeptide reads, in one-letter code: Taste receptor type 2 member 8 (309 aa).

The Extracellular portion of the chain corresponds to 1–7; that stretch reads MFSPADN. A helical transmembrane segment spans residues 8–28; it reads IFIILITGEFIIGILGNGYIG. Topologically, residues 29–50 are cytoplasmic; it reads LVNWIDWIKKKKISTIDCILTN. Residues 51–71 traverse the membrane as a helical segment; it reads LVISRICLISVMVVNGIVIVL. At 72–82 the chain is on the extracellular side; sequence YPDVYTKTKLQ. Residues 83-103 traverse the membrane as a helical segment; the sequence is IVICTFWTFANYLNMWFTACL. At 104-131 the chain is on the cytoplasmic side; the sequence is NVFYSLKVANSSHPLFLWLKRKIDMVVR. A helical membrane pass occupies residues 132–152; that stretch reads WILLGCFAISLLVSLIIATVL. The Extracellular segment spans residues 153–184; that stretch reads SHDYRFHAIAKHKRNVTEMFHVSKMPYFEPLT. N-linked (GlcNAc...) asparagine glycosylation occurs at Asn167. Residues 185–205 traverse the membrane as a helical segment; the sequence is LFNLLAIVPFIVSLMSFFLLV. Over 206-239 the chain is Cytoplasmic; that stretch reads RSLWRHTKQIKLYATGGRDPSTEAHVRAIKTMTL. A helical transmembrane segment spans residues 240–260; it reads LIFFFFLYYITSLLVXFSYLI. The Extracellular portion of the chain corresponds to 261 to 266; that stretch reads TNYKLA. Residues 267-287 form a helical membrane-spanning segment; sequence MAFGEIVAILYPSGHSLILII. Residues 288–309 lie on the Cytoplasmic side of the membrane; that stretch reads LNNKLRQASVRMLTCRKIACVT.

The protein belongs to the G-protein coupled receptor T2R family.

Its subcellular location is the membrane. Receptor that may play a role in the perception of bitterness and is gustducin-linked. May play a role in sensing the chemical composition of the gastrointestinal content. The activity of this receptor may stimulate alpha gustducin, mediate PLC-beta-2 activation and lead to the gating of TRPM5. The protein is Taste receptor type 2 member 8 (TAS2R8) of Papio hamadryas (Hamadryas baboon).